A 196-amino-acid polypeptide reads, in one-letter code: Proteasome subunit beta 2 (196 aa).

The propeptide at 1–6 (MEELPS) is removed in mature form; by autocatalysis. Catalysis depends on T7, which acts as the Nucleophile.

This sequence belongs to the peptidase T1B family. In terms of assembly, the 20S proteasome core is composed of 14 alpha and 14 beta subunits that assemble into four stacked heptameric rings, resulting in a barrel-shaped structure. The two inner rings, each composed of seven catalytic beta subunits, are sandwiched by two outer rings, each composed of seven alpha subunits. The catalytic chamber with the active sites is on the inside of the barrel. Has a gated structure, the ends of the cylinder being occluded by the N-termini of the alpha-subunits. Is capped at one or both ends by the proteasome regulatory ATPase, PAN.

It is found in the cytoplasm. The catalysed reaction is Cleavage of peptide bonds with very broad specificity.. Its activity is regulated as follows. The formation of the proteasomal ATPase PAN-20S proteasome complex, via the docking of the C-termini of PAN into the intersubunit pockets in the alpha-rings, triggers opening of the gate for substrate entry. Interconversion between the open-gate and close-gate conformations leads to a dynamic regulation of the 20S proteasome proteolysis activity. Component of the proteasome core, a large protease complex with broad specificity involved in protein degradation. In Metallosphaera sedula (strain ATCC 51363 / DSM 5348 / JCM 9185 / NBRC 15509 / TH2), this protein is Proteasome subunit beta 2.